A 282-amino-acid polypeptide reads, in one-letter code: Leucine-rich protein (282 aa).

Not essential for viability or growth. Nevertheless, uncontrolled production in E.coli is detrimental to the normal physiology of the bacteria. In Streptococcus dysgalactiae subsp. equisimilis (Streptococcus equisimilis), this protein is Leucine-rich protein (lrp).